Reading from the N-terminus, the 328-residue chain is DNA-directed RNA polymerase subunit alpha (328 aa).

Residues 1–234 form an alpha N-terminal domain (alpha-NTD) region; the sequence is MQNSTTEFLK…DQMSIFADLQ (234 aa). Positions 248-328 are alpha C-terminal domain (alpha-CTD); that stretch reads IDPVLLRPVD…AWPPVGLEKP (81 aa).

Belongs to the RNA polymerase alpha chain family. As to quaternary structure, homodimer. The RNAP catalytic core consists of 2 alpha, 1 beta, 1 beta' and 1 omega subunit. When a sigma factor is associated with the core the holoenzyme is formed, which can initiate transcription.

It catalyses the reaction RNA(n) + a ribonucleoside 5'-triphosphate = RNA(n+1) + diphosphate. In terms of biological role, DNA-dependent RNA polymerase catalyzes the transcription of DNA into RNA using the four ribonucleoside triphosphates as substrates. The polypeptide is DNA-directed RNA polymerase subunit alpha (Neisseria meningitidis serogroup A / serotype 4A (strain DSM 15465 / Z2491)).